The primary structure comprises 562 residues: Glutamate--tRNA ligase (562 aa).

Positions 104-114 (PNPDFYMTLGN) match the 'HIGH' region motif.

Belongs to the class-I aminoacyl-tRNA synthetase family. Glutamate--tRNA ligase type 2 subfamily.

The protein localises to the cytoplasm. The enzyme catalyses tRNA(Glu) + L-glutamate + ATP = L-glutamyl-tRNA(Glu) + AMP + diphosphate. Catalyzes the attachment of glutamate to tRNA(Glu) in a two-step reaction: glutamate is first activated by ATP to form Glu-AMP and then transferred to the acceptor end of tRNA(Glu). The protein is Glutamate--tRNA ligase of Ignicoccus hospitalis (strain KIN4/I / DSM 18386 / JCM 14125).